Consider the following 405-residue polypeptide: DNA primase DnaG (405 aa).

Positions 172–248 (DAIIIVEGRA…HVDYIARAPP (77 aa)) constitute a Toprim domain. Mg(2+) is bound by residues Glu-178, Asp-222, and Asp-224. Residues 279-303 (ASGERAEAPPQPAQQPQQEQPAPQR) form a disordered region. Over residues 292–303 (QQPQQEQPAPQR) the composition is skewed to low complexity.

It belongs to the archaeal DnaG primase family. In terms of assembly, forms a ternary complex with MCM helicase and DNA. Component of the archaeal exosome complex. Mg(2+) serves as cofactor.

The enzyme catalyses ssDNA + n NTP = ssDNA/pppN(pN)n-1 hybrid + (n-1) diphosphate.. Functionally, RNA polymerase that catalyzes the synthesis of short RNA molecules used as primers for DNA polymerase during DNA replication. Also part of the exosome, which is a complex involved in RNA degradation. Acts as a poly(A)-binding protein that enhances the interaction between heteromeric, adenine-rich transcripts and the exosome. This is DNA primase DnaG from Pyrobaculum arsenaticum (strain DSM 13514 / JCM 11321 / PZ6).